Here is a 500-residue protein sequence, read N- to C-terminus: NAD(P)H-quinone oxidoreductase chain 4, chloroplastic (500 aa).

15 helical membrane-spanning segments follow: residues Phe-4–Phe-24, Ile-37–Leu-57, Ile-87–Val-107, Leu-113–Ser-130, Leu-134–Met-154, Phe-167–Leu-187, Ile-207–Ile-227, His-242–Val-262, Ala-272–Ala-292, Ile-305–Asp-325, Gly-330–Gly-350, Met-364–Ala-384, Leu-386–Thr-406, Val-417–Leu-437, and Phe-463–Phe-483.

Belongs to the complex I subunit 4 family.

It localises to the plastid. The protein localises to the chloroplast thylakoid membrane. The catalysed reaction is a plastoquinone + NADH + (n+1) H(+)(in) = a plastoquinol + NAD(+) + n H(+)(out). It carries out the reaction a plastoquinone + NADPH + (n+1) H(+)(in) = a plastoquinol + NADP(+) + n H(+)(out). The protein is NAD(P)H-quinone oxidoreductase chain 4, chloroplastic of Cucumis sativus (Cucumber).